Reading from the N-terminus, the 118-residue chain is UPF0058 protein MJ1132 (118 aa).

This sequence belongs to the UPF0058 family.

The chain is UPF0058 protein MJ1132 from Methanocaldococcus jannaschii (strain ATCC 43067 / DSM 2661 / JAL-1 / JCM 10045 / NBRC 100440) (Methanococcus jannaschii).